A 178-amino-acid chain; its full sequence is Cytidylate kinase (178 aa).

An ATP-binding site is contributed by 7 to 15; that stretch reads GLPGTGTTT.

The protein belongs to the cytidylate kinase family. Type 2 subfamily.

Its subcellular location is the cytoplasm. The enzyme catalyses CMP + ATP = CDP + ADP. The catalysed reaction is dCMP + ATP = dCDP + ADP. The polypeptide is Cytidylate kinase (Methanococcus maripaludis (strain C5 / ATCC BAA-1333)).